The following is a 43-amino-acid chain: Protein PsbN (43 aa).

Residues 7–27 (VTIFISGLLVSFTGYALYIAF) traverse the membrane as a helical segment.

The protein belongs to the PsbN family.

The protein resides in the plastid. Its subcellular location is the chloroplast thylakoid membrane. Its function is as follows. May play a role in photosystem I and II biogenesis. This Dioscorea bulbifera (Air potato) protein is Protein PsbN.